The sequence spans 425 residues: Enolase (425 aa).

Gln163 lines the (2R)-2-phosphoglycerate pocket. Glu205 (proton donor) is an active-site residue. Asp242, Glu285, and Asp312 together coordinate Mg(2+). 4 residues coordinate (2R)-2-phosphoglycerate: Lys337, Arg366, Ser367, and Lys388. The active-site Proton acceptor is the Lys337.

This sequence belongs to the enolase family. It depends on Mg(2+) as a cofactor.

The protein resides in the cytoplasm. The protein localises to the secreted. It is found in the cell surface. It catalyses the reaction (2R)-2-phosphoglycerate = phosphoenolpyruvate + H2O. It functions in the pathway carbohydrate degradation; glycolysis; pyruvate from D-glyceraldehyde 3-phosphate: step 4/5. Functionally, catalyzes the reversible conversion of 2-phosphoglycerate (2-PG) into phosphoenolpyruvate (PEP). It is essential for the degradation of carbohydrates via glycolysis. This is Enolase from Jannaschia sp. (strain CCS1).